Reading from the N-terminus, the 234-residue chain is Rhodanese-like domain-containing protein 9, chloroplastic (234 aa).

Residues 1–47 (MAGIISPSPTALYFTSNVGGRRLKAVSWAGKSVSGNVIRRRSLRIAA) constitute a chloroplast transit peptide. Positions 62–185 (AEEGYSVVDV…VKPGTFESVG (124 aa)) constitute a Rhodanese domain. Cys-145 functions as the Cysteine persulfide intermediate in the catalytic mechanism. A helical transmembrane segment spans residues 204–222 (ISAVLGTVLVCAYLFIQFF).

It localises to the plastid. The protein localises to the chloroplast. The protein resides in the membrane. This Arabidopsis thaliana (Mouse-ear cress) protein is Rhodanese-like domain-containing protein 9, chloroplastic (STR9).